Reading from the N-terminus, the 404-residue chain is MSGAEEAGGGGPAAGPAGSVPAGVGVGVGAGPGAAAGQAAAAALGEAAGPGLPDEAGLAGARQLQLQEAAGDPDAPPKKRLRAAEAAEAAAAAAAAGSGKLEERLYSVLCCTVCLDLPKASVYQCTNGHLMCAGCFIHLLADARLKEEQATCPNCRCEISKSLCCRNLAVEKAVSELPSECGFCLRQFPRSLLERHQKEECQDRVTQCKYKRIGCPWHGPFHELTVHEAACAHPTKTGSELMEILDGMDQSHRKEMQLYNSIFSLLSFEKIGYTEVQFRPYRTDDFITRLYYETPRFTVLNQTWVLKARVNDSERNPNLSCKRTLSFQLLLKSKVTAPLECSFLLLKGPYDDVRISPVIYHFVFTNESNETDYVPLPIIDSVECNKLLAAKNINLRLFLFQIQK.

A compositionally biased stretch (gly residues) spans 1–13 (MSGAEEAGGGGPA). Residues 1–22 (MSGAEEAGGGGPAAGPAGSVPA) form a disordered region. Residues 111–156 (CTVCLDLPKASVYQCTNGHLMCAGCFIHLLADARLKEEQATCPNCR) form an RING-type; degenerate zinc finger. A TRAF-type zinc finger spans residues 152-225 (CPNCRCEISK…PWHGPFHELT (74 aa)).

Belongs to the ZFTRAF1 family. In terms of assembly, interacts with LGALS3.

Its subcellular location is the cytoplasm. It is found in the perinuclear region. The chain is Zinc finger TRAF-type-containing protein 1 from Homo sapiens (Human).